A 417-amino-acid polypeptide reads, in one-letter code: Gamma-glutamyl phosphate reductase (417 aa).

The protein belongs to the gamma-glutamyl phosphate reductase family.

The protein resides in the cytoplasm. It catalyses the reaction L-glutamate 5-semialdehyde + phosphate + NADP(+) = L-glutamyl 5-phosphate + NADPH + H(+). The protein operates within amino-acid biosynthesis; L-proline biosynthesis; L-glutamate 5-semialdehyde from L-glutamate: step 2/2. Its function is as follows. Catalyzes the NADPH-dependent reduction of L-glutamate 5-phosphate into L-glutamate 5-semialdehyde and phosphate. The product spontaneously undergoes cyclization to form 1-pyrroline-5-carboxylate. The sequence is that of Gamma-glutamyl phosphate reductase from Escherichia coli O127:H6 (strain E2348/69 / EPEC).